A 388-amino-acid chain; its full sequence is 3-oxo-Delta(4,5)-steroid 5-beta-reductase (388 aa).

Residue Ser-2 is modified to N-acetylserine. Residues 35–37 (TGI), 63–64 (RR), 81–82 (DV), Thr-105, and Gln-143 contribute to the NADP(+) site. Active-site residues include Lys-147 and Tyr-178. Residues Tyr-178, Ile-205, and 212-214 (SLM) contribute to the NADP(+) site.

This sequence belongs to the short-chain dehydrogenases/reductases (SDR) family. Highly divergent. As to quaternary structure, homodimer. As to expression, expressed in roots, stems, leaves, flowers, seeds and siliques. Expressed in the vascular bundles.

The catalysed reaction is 5beta-cholestan-3-one + NADP(+) = cholest-4-en-3-one + NADPH + H(+). The enzyme catalyses 4,5beta-dihydrocortisone + NADP(+) = cortisone + NADPH + H(+). Involved in vascular strand development. Catalyzes the stereospecific conversion of progesterone to 5-beta-pregnane-3,20-dione. Can use progesterone, testosterone, 21-acetyl cortexone, 2-cyclohexenone, but-1-en-3-one, ethyl acrylate, ethylmethacrylate, cortisone and canarigenone as substrates, lower activity with 3-methyl-2-cyclohexenone and 3,5,5-trimethyl-2-cyclohexenone as substrate, and no activity with canarigenin, canarigenin digitoxoside and pregnenolone. May be involved in the formation of 5-beta phytoecdysteroids. This is 3-oxo-Delta(4,5)-steroid 5-beta-reductase (VEP1) from Arabidopsis thaliana (Mouse-ear cress).